We begin with the raw amino-acid sequence, 407 residues long: Multifunctional CCA protein (407 aa).

Positions 8 and 11 each coordinate ATP. CTP contacts are provided by Gly8 and Arg11. Positions 21 and 23 each coordinate Mg(2+). Residues Arg91, Arg137, and Arg140 each contribute to the ATP site. CTP contacts are provided by Arg91, Arg137, and Arg140. Residues 228 to 329 (TGVHALMALA…VALFDRVDAW (102 aa)) enclose the HD domain.

It belongs to the tRNA nucleotidyltransferase/poly(A) polymerase family. Bacterial CCA-adding enzyme type 1 subfamily. Monomer. Can also form homodimers and oligomers. Mg(2+) is required as a cofactor. Requires Ni(2+) as cofactor.

The catalysed reaction is a tRNA precursor + 2 CTP + ATP = a tRNA with a 3' CCA end + 3 diphosphate. It carries out the reaction a tRNA with a 3' CCA end + 2 CTP + ATP = a tRNA with a 3' CCACCA end + 3 diphosphate. Functionally, catalyzes the addition and repair of the essential 3'-terminal CCA sequence in tRNAs without using a nucleic acid template. Adds these three nucleotides in the order of C, C, and A to the tRNA nucleotide-73, using CTP and ATP as substrates and producing inorganic pyrophosphate. tRNA 3'-terminal CCA addition is required both for tRNA processing and repair. Also involved in tRNA surveillance by mediating tandem CCA addition to generate a CCACCA at the 3' terminus of unstable tRNAs. While stable tRNAs receive only 3'-terminal CCA, unstable tRNAs are marked with CCACCA and rapidly degraded. This Erwinia tasmaniensis (strain DSM 17950 / CFBP 7177 / CIP 109463 / NCPPB 4357 / Et1/99) protein is Multifunctional CCA protein.